Reading from the N-terminus, the 987-residue chain is UvrABC system protein A (987 aa).

Residue 33–40 (GLSGSGKS) coordinates ATP. The segment at 255–282 (CPVCDYSLPELEPRLFSFNAPVGACPSC) adopts a C4-type zinc-finger fold. 2 consecutive ABC transporter domains span residues 312–589 (WDRR…PRSL) and 609–938 (PNPK…QFLA). Position 642 to 649 (642 to 649 (GVSGSGKS)) interacts with ATP. The C4-type zinc finger occupies 741–767 (CEACQGDGMIKVEMHFLPDVYVPCDVC). The interval 948–987 (ETRPAAMANKPDARPPRKVKPEKVAKAAKSATKKTAKKAS) is disordered. Positions 958–972 (PDARPPRKVKPEKVA) are enriched in basic and acidic residues. The span at 978–987 (ATKKTAKKAS) shows a compositional bias: basic residues.

This sequence belongs to the ABC transporter superfamily. UvrA family. In terms of assembly, forms a heterotetramer with UvrB during the search for lesions.

Its subcellular location is the cytoplasm. The UvrABC repair system catalyzes the recognition and processing of DNA lesions. UvrA is an ATPase and a DNA-binding protein. A damage recognition complex composed of 2 UvrA and 2 UvrB subunits scans DNA for abnormalities. When the presence of a lesion has been verified by UvrB, the UvrA molecules dissociate. The chain is UvrABC system protein A from Xanthomonas axonopodis pv. citri (strain 306).